A 971-amino-acid polypeptide reads, in one-letter code: Lon protease homolog, mitochondrial (971 aa).

The N-terminal 55 residues, 1–55 (MYRAGAVLLRGATRTRLLAAASAHQSFATFSQRNQSILMMKSMELAGNSGERRFY), are a transit peptide targeting the mitochondrion. The region spanning 89 to 359 (VPMLAINRYP…IALLLIQKEK (271 aa)) is the Lon N-terminal domain. The tract at residues 190 to 255 (TPKNETPLNG…PPSATGEKQK (66 aa)) is disordered. The segment covering 214-224 (LTPPPSPPPLA) has biased composition (pro residues). 512-519 (GPPGVGKT) is a binding site for ATP. The tract at residues 718–749 (AEQQNEDEEPAEKATTAITENSEAEPITSTSS) is disordered. The segment covering 733 to 749 (TAITENSEAEPITSTSS) has biased composition (polar residues). A Lon proteolytic domain is found at 784 to 971 (VTPPGVIMGL…YDELYEHLFQ (188 aa)). Catalysis depends on residues Ser-878 and Lys-921.

The protein belongs to the peptidase S16 family. In terms of assembly, homohexamer or homoheptamer. Organized in a ring with a central cavity.

It is found in the mitochondrion matrix. It catalyses the reaction Hydrolysis of proteins in presence of ATP.. Its function is as follows. ATP-dependent serine protease that mediates the selective degradation of misfolded, unassembled or oxidatively damaged polypeptides as well as certain short-lived regulatory proteins in the mitochondrial matrix. May also have a chaperone function in the assembly of inner membrane protein complexes. Participates in the regulation of mitochondrial gene expression and in the maintenance of the integrity of the mitochondrial genome. Binds to mitochondrial DNA in a site-specific manner. Involved in the degradation of transcription factor atfs-1 in the mitochondrion. The sequence is that of Lon protease homolog, mitochondrial from Caenorhabditis elegans.